We begin with the raw amino-acid sequence, 511 residues long: Exodeoxyribonuclease 7 large subunit (511 aa).

This sequence belongs to the XseA family. Heterooligomer composed of large and small subunits.

The protein localises to the cytoplasm. It catalyses the reaction Exonucleolytic cleavage in either 5'- to 3'- or 3'- to 5'-direction to yield nucleoside 5'-phosphates.. Its function is as follows. Bidirectionally degrades single-stranded DNA into large acid-insoluble oligonucleotides, which are then degraded further into small acid-soluble oligonucleotides. The polypeptide is Exodeoxyribonuclease 7 large subunit (Brucella ovis (strain ATCC 25840 / 63/290 / NCTC 10512)).